The primary structure comprises 475 residues: Ribulose bisphosphate carboxylase large chain (475 aa).

Residues 1–2 constitute a propeptide that is removed on maturation; sequence MS. P3 is modified (N-acetylproline). Residue K14 is modified to N6,N6,N6-trimethyllysine. Residues N123 and T173 each coordinate substrate. Catalysis depends on K175, which acts as the Proton acceptor. A substrate-binding site is contributed by K177. Mg(2+)-binding residues include K201, D203, and E204. An N6-carboxylysine modification is found at K201. Catalysis depends on H294, which acts as the Proton acceptor. Substrate contacts are provided by R295, H327, and S379.

The protein belongs to the RuBisCO large chain family. Type I subfamily. As to quaternary structure, heterohexadecamer of 8 large chains and 8 small chains; disulfide-linked. The disulfide link is formed within the large subunit homodimers. The cofactor is Mg(2+). Post-translationally, the disulfide bond which can form in the large chain dimeric partners within the hexadecamer appears to be associated with oxidative stress and protein turnover.

The protein localises to the plastid. It is found in the chloroplast. It carries out the reaction 2 (2R)-3-phosphoglycerate + 2 H(+) = D-ribulose 1,5-bisphosphate + CO2 + H2O. The enzyme catalyses D-ribulose 1,5-bisphosphate + O2 = 2-phosphoglycolate + (2R)-3-phosphoglycerate + 2 H(+). Its function is as follows. RuBisCO catalyzes two reactions: the carboxylation of D-ribulose 1,5-bisphosphate, the primary event in carbon dioxide fixation, as well as the oxidative fragmentation of the pentose substrate in the photorespiration process. Both reactions occur simultaneously and in competition at the same active site. The protein is Ribulose bisphosphate carboxylase large chain of Anthoceros angustus (Hornwort).